Here is a 281-residue protein sequence, read N- to C-terminus: Large ribosomal subunit protein uL2 (281 aa).

The disordered stretch occupies residues 222-281 (TVRGSVMNPNDHPHGGGEGRTPIGRKSPVTPWGKKALGVKTRNTKKPSEKLIVRKRNAKK).

It belongs to the universal ribosomal protein uL2 family. In terms of assembly, part of the 50S ribosomal subunit. Forms a bridge to the 30S subunit in the 70S ribosome.

Functionally, one of the primary rRNA binding proteins. Required for association of the 30S and 50S subunits to form the 70S ribosome, for tRNA binding and peptide bond formation. It has been suggested to have peptidyltransferase activity; this is somewhat controversial. Makes several contacts with the 16S rRNA in the 70S ribosome. This chain is Large ribosomal subunit protein uL2, found in Mesoplasma florum (strain ATCC 33453 / NBRC 100688 / NCTC 11704 / L1) (Acholeplasma florum).